We begin with the raw amino-acid sequence, 92 residues long: Large ribosomal subunit protein bL28 (92 aa).

A disordered region spans residues 1–34 (MGRECEITGKKTMFGNNVPRKGLSRKKGGGGQHI).

The protein belongs to the bacterial ribosomal protein bL28 family.

This is Large ribosomal subunit protein bL28 from Borrelia turicatae (strain 91E135).